The primary structure comprises 99 residues: Nucleoid-associated protein LL0120 (99 aa).

Belongs to the YbaB/EbfC family. Homodimer.

The protein resides in the cytoplasm. It localises to the nucleoid. In terms of biological role, binds to DNA and alters its conformation. May be involved in regulation of gene expression, nucleoid organization and DNA protection. The sequence is that of Nucleoid-associated protein LL0120 (ybcG) from Lactococcus lactis subsp. lactis (strain IL1403) (Streptococcus lactis).